Reading from the N-terminus, the 122-residue chain is Basic phospholipase A2 10 (122 aa).

Cystine bridges form between C26–C114, C28–C43, C42–C94, C48–C122, C49–C87, C56–C80, and C74–C85. Ca(2+)-binding residues include Y27, G29, and G31. H46 is a catalytic residue. D47 serves as a coordination point for Ca(2+). Residue D88 is part of the active site.

It depends on Ca(2+) as a cofactor. As to expression, expressed by the venom gland.

It is found in the secreted. It catalyses the reaction a 1,2-diacyl-sn-glycero-3-phosphocholine + H2O = a 1-acyl-sn-glycero-3-phosphocholine + a fatty acid + H(+). Inhibited by chemical modifications mediated by p-BPB, anhydrous acetic acid and NBSF. Functionally, snake venom phospholipase A2 (PLA2) that has a strong dose-dependent anticoagulant effect. In vivo, intramuscular and intervenal injection causes muscle necrosis. Induces moderate edema in the mouse foot pad. PLA2 catalyzes the calcium-dependent hydrolysis of the 2-acyl groups in 3-sn-phosphoglycerides. The sequence is that of Basic phospholipase A2 10 from Crotalus durissus cumanensis (South American rattlesnake).